We begin with the raw amino-acid sequence, 702 residues long: Phosphoglycerol transferase I (702 aa).

3 helical membrane-spanning segments follow: residues 2-22 (HWMLLVSLLLLLWLLVASPRL), 71-91 (FSGYIAVFVGMLLLSLSPLLL), and 103-123 (GGAVFAGFVGMLLVGIAASPL).

Belongs to the OpgB family.

The protein resides in the cell inner membrane. It carries out the reaction a phosphatidylglycerol + a membrane-derived-oligosaccharide D-glucose = a 1,2-diacyl-sn-glycerol + a membrane-derived-oligosaccharide 6-(glycerophospho)-D-glucose.. It functions in the pathway glycan metabolism; osmoregulated periplasmic glucan (OPG) biosynthesis. In terms of biological role, transfers a phosphoglycerol residue from phosphatidylglycerol to the membrane-bound nascent glucan backbones. This is Phosphoglycerol transferase I from Xanthomonas euvesicatoria pv. vesicatoria (strain 85-10) (Xanthomonas campestris pv. vesicatoria).